The chain runs to 165 residues: Phosphopantetheine adenylyltransferase (165 aa).

Thr-9 contributes to the substrate binding site. ATP contacts are provided by residues 9-10 and His-17; that span reads TF. Residues Lys-41, Leu-73, and Arg-87 each coordinate substrate. ATP-binding positions include 88–90, Glu-98, and 123–129; these read GLR and YQFISGT.

It belongs to the bacterial CoaD family. In terms of assembly, homohexamer. Mg(2+) serves as cofactor.

The protein resides in the cytoplasm. It catalyses the reaction (R)-4'-phosphopantetheine + ATP + H(+) = 3'-dephospho-CoA + diphosphate. Its pathway is cofactor biosynthesis; coenzyme A biosynthesis; CoA from (R)-pantothenate: step 4/5. Its function is as follows. Reversibly transfers an adenylyl group from ATP to 4'-phosphopantetheine, yielding dephospho-CoA (dPCoA) and pyrophosphate. This chain is Phosphopantetheine adenylyltransferase, found in Polynucleobacter necessarius subsp. necessarius (strain STIR1).